We begin with the raw amino-acid sequence, 56 residues long: Ovomucoid (56 aa).

One can recognise a Kazal-like domain in the interval 6–56 (VDCSDHPKPACLQEQKPICGSDNKTYDNKCSFCNAVVDSNGTLTLSHFGKC). Cystine bridges form between cysteine 8-cysteine 38, cysteine 16-cysteine 35, and cysteine 24-cysteine 56. A glycan (N-linked (GlcNAc...) asparagine) is linked at asparagine 45.

The protein resides in the secreted. This is Ovomucoid from Ortalis vetula (Plain chachalaca).